Reading from the N-terminus, the 145-residue chain is MLFYITVTVLLVSAQAKFYTDCGSKLATVQSVGVSGWPENARECVLKRNSNVTISIDFSPTTDVSAITTEVHGVIMSLPVPFPCRSPDACKDNGLTCPIKAGVVANYKTTLPVLKSYPKVSVDVKWELKKDEEDLVCILIPARIH.

An N-terminal signal peptide occupies residues 1-16 (MLFYITVTVLLVSAQA). Intrachain disulfides connect Cys22/Cys137 and Cys90/Cys97. Asn51 carries an N-linked (GlcNAc...) asparagine glycan.

The protein belongs to the NPC2 family.

It is found in the secreted. The polypeptide is Ecdysteroid-regulated 16 kDa protein (ESR16) (Manduca sexta (Tobacco hawkmoth)).